A 99-amino-acid chain; its full sequence is Carboxysome shell vertex protein CcmL (99 aa).

The BMV domain occupies 1–83 (MRIAKVRGTV…VDAAVIAIID (83 aa)).

This sequence belongs to the CcmL/EutN family. CcmL subfamily. As to quaternary structure, homopentamer. Interacts with full-length CcmM.

It is found in the carboxysome. Functionally, probably forms vertices in the carboxysome, a polyhedral inclusion where RuBisCO (ribulose bisphosphate carboxylase, rbcL-rbcS) is sequestered. Has been modeled to induce curvature upon insertion into an otherwise flat hexagonal molecular layer of CcmK subunits. In terms of biological role, beta-carboxysome assembly initiates when soluble RuBisCO is condensed into a liquid matrix in a pre-carboxysome by the RbcS-like domains of probably both CcmM58 and CcmM35. CcmN interacts with the N-terminus of CcmM58, and then recruits the CcmK2 major shell protein via CcmN's encapsulation peptide. Shell formation requires CcmK proteins and CcmO. CcmL caps the otherwise elongated carboxysome. Once fully encapsulated carboxysomes are formed, they migrate within the cell probably via interactions with the cytoskeleton. This Synechococcus elongatus (strain ATCC 33912 / PCC 7942 / FACHB-805) (Anacystis nidulans R2) protein is Carboxysome shell vertex protein CcmL.